A 292-amino-acid chain; its full sequence is Glutamate racemase (292 aa).

Substrate contacts are provided by residues 28 to 29 and 60 to 61; these read DS and YG. Cysteine 91 serves as the catalytic Proton donor/acceptor. 92–93 lines the substrate pocket; sequence NT. The active-site Proton donor/acceptor is cysteine 200. 201–202 serves as a coordination point for substrate; sequence TH.

Belongs to the aspartate/glutamate racemases family.

The enzyme catalyses L-glutamate = D-glutamate. It functions in the pathway cell wall biogenesis; peptidoglycan biosynthesis. Provides the (R)-glutamate required for cell wall biosynthesis. The sequence is that of Glutamate racemase from Nostoc sp. (strain PCC 7120 / SAG 25.82 / UTEX 2576).